The primary structure comprises 309 residues: Protein FdhE homolog (309 aa).

It belongs to the FdhE family.

It localises to the cytoplasm. Its function is as follows. Necessary for formate dehydrogenase activity. The chain is Protein FdhE homolog from Klebsiella pneumoniae (strain 342).